Reading from the N-terminus, the 259-residue chain is MGSKTLPAPVPIHPSLQLTNYSFLQAFNGLPVPAEHMPNLYGFSALHAVHLHQWTLGYPTLHLPRSSFSKVPGVSSLVDSRFQIPTFPLFPHMIHPKQESPNLSNKTKPRFDFANLALAATQEDHCKLGQMDDQGSPPTIGGLLDVTKLTPEKKPTRGRLPSKTKKEFVCKFCGRHFTKSYNLLIHERTHTDERPYTCDICHKAFRRQDHLRDHRYIHSKEKPFKCQECGKGFCQSRTLAVHKTLHTQVKELKPSKIKC.

3 C2H2-type zinc fingers span residues 168 to 190, 196 to 218, and 224 to 246; these read FVCKFCGRHFTKSYNLLIHERTH, YTCDICHKAFRRQDHLRDHRYIH, and FKCQECGKGFCQSRTLAVHKTLH.

Belongs to the Odd C2H2-type zinc-finger protein family.

Its subcellular location is the nucleus. In terms of biological role, transcriptional repressor. Required for pronephric kidney development. The protein is Protein odd-skipped-related 1 of Xenopus tropicalis (Western clawed frog).